A 138-amino-acid polypeptide reads, in one-letter code: HTH-type transcriptional regulator CymR (138 aa).

Residues K2–S125 enclose the HTH rrf2-type domain. Residues L28–N51 constitute a DNA-binding region (H-T-H motif).

As to quaternary structure, homodimer. Forms homotetramers at higher concentrations of protein. Forms CymR(2):CysK(2) or CymR(4):CysK(4) complexes in the absence of O-acetylserine.

Functionally, master repressor of cysteine metabolism in B.subtilis. Controls the expression of genes involved either in cysteine synthesis from sulfide (cysK), sulfonates (ssu), or methionine (mccAB) or in cystine uptake (tcyP). Activity of CymR is positively regulated by CysK in response to cysteine availability. When cysteine is present, the pool of O-acetylserine (OAS) is low, which leads to the formation of a CymR-CysK complex and transcriptional repression of the CymR regulon occurs. In the absence of cysteine, the OAS pool is high and the CymR-CysK complex is mostly dissociated, leading to a faster dissociation of CymR from its DNA targets and the lifting of CymR-dependent repression. This is HTH-type transcriptional regulator CymR (cymR) from Bacillus subtilis (strain 168).